The primary structure comprises 430 residues: C4-dicarboxylate transport protein (430 aa).

8 consecutive transmembrane segments (helical) span residues 9-29 (VLYVQVIFAIIVGVILGHFYP), 45-65 (LIKMVIGPIIFCTVVTGIAGM), 79-99 (LLYFEIVSTFALLLGLAATHL), 149-169 (GEILQILLIALLFGSVLAHLG), 185-205 (VLFGIVHIVTKLAPIGAFGAM), 223-243 (LIGTFYLTSVVFVLVVLGAIA), 308-328 (IYMTMAVLFIAQATNIELTWM), and 356-376 (AATLAVVPTIPLSGMVLILGI).

It belongs to the dicarboxylate/amino acid:cation symporter (DAACS) (TC 2.A.23) family.

The protein localises to the cell inner membrane. Its function is as follows. Responsible for the transport of dicarboxylates such as succinate, fumarate, and malate from the periplasm across the membrane. This Burkholderia orbicola (strain AU 1054) protein is C4-dicarboxylate transport protein.